Here is a 583-residue protein sequence, read N- to C-terminus: MKELFIGNYGLEQVGQKVTAKGWVANIRNHGKLAFIELRDREGLLQVFVDSAVADFDKLHDLHKESILAVTGEIVARDERFVNPHIKSGQVELRAETIEIIASSKLLPFELDNHAHAGEDIRQKYRYLDLRREKMTANLKLRHQVTKAIRDYLNQADFIDVETPYLTKSTPEGARDFLVPSRVFKNQFYALPQSPQMLKQLLMGAGLERYYQIVRCFRDEDLRGDRQPEFTQVDLEMSFVSEEDVRNLVEGMLKAVVKASKGIELTEAFPIISYAQAMRRFGSDKPDTRFAMELKDLTELSRGNTSLFLQKGLKKENGVVMGICAKNAAKAFTNRQMATLKQLVMDFGVAGFATATIEKGQVTGSLKSTFKDHNTELLELFEAEDGDMIFFVTGSLKRVQEALGGLRVRLAKDLELIDNDKLNFLWVVDWPLLEWNEDLNRYQAMHHPFTQGAFEDGSDWKENPEKMMSRAYDIVLNGYEIGGGSLRIHKRSAQEAMFELLGMKKEDYERDFGFFLEALEYGFPPHGGLALGLDRLVMILAEEGNIREVIAFPKNGQGADAMLESPSLVADQQLAELRLALRD.

Glu172 provides a ligand contact to L-aspartate. The segment at 196–199 (QMLK) is aspartate. Arg218 is an L-aspartate binding site. ATP is bound by residues 218 to 220 (RDE) and Gln227. His446 contacts L-aspartate. Glu480 contacts ATP. An L-aspartate-binding site is contributed by Arg487. 532 to 535 (GLDR) contacts ATP.

It belongs to the class-II aminoacyl-tRNA synthetase family. Type 1 subfamily. Homodimer.

The protein resides in the cytoplasm. The catalysed reaction is tRNA(Asx) + L-aspartate + ATP = L-aspartyl-tRNA(Asx) + AMP + diphosphate. In terms of biological role, aspartyl-tRNA synthetase with relaxed tRNA specificity since it is able to aspartylate not only its cognate tRNA(Asp) but also tRNA(Asn). Reaction proceeds in two steps: L-aspartate is first activated by ATP to form Asp-AMP and then transferred to the acceptor end of tRNA(Asp/Asn). This is Aspartate--tRNA(Asp/Asn) ligase from Streptococcus mutans serotype c (strain ATCC 700610 / UA159).